A 603-amino-acid chain; its full sequence is Spastin (603 aa).

The tract at residues 1-34 (MNSPGGRNNKKKPVTPAAETGPGPPTPPPPPAET) is disordered. Over 1 to 54 (MNSPGGRNNKKKPVTPAAETGPGPPTPPPPPAETQVLLAPPSLHKRNLYLFSYP) the chain is Cytoplasmic. The span at 22–32 (PGPPTPPPPPA) shows a compositional bias: pro residues. An intramembrane region (helical) is located at residues 55–75 (LLAAFSLLRFLAFQLGLLFVW). Residues 76–603 (FCERLSRRVM…WNKEFGDTTV (528 aa)) lie on the Cytoplasmic side of the membrane. In terms of domain architecture, MIT spans 113-188 (YHQQAFQYIS…LMAKDRLQLL (76 aa)). Residues 216–294 (GLLKPEKGAV…RTNKPTTPTT (79 aa)) are disordered. The span at 219–231 (KPEKGAVPKKKDP) shows a compositional bias: basic and acidic residues. Over residues 281–294 (KNNTRTNKPTTPTT) the composition is skewed to low complexity. 369 to 376 (GPPGNGKT) provides a ligand contact to ATP.

This sequence belongs to the AAA ATPase family. Spastin subfamily. Homohexamer. The homohexamer is stabilized by ATP-binding. The homohexamer may adopt a ring conformation through which microtubules pass prior to being severed. Interacts with microtubules.

It localises to the membrane. Its subcellular location is the cytoplasm. It is found in the cytoskeleton. The protein resides in the microtubule organizing center. The protein localises to the centrosome. It localises to the perinuclear region. Its subcellular location is the nucleus. It carries out the reaction n ATP + n H2O + a microtubule = n ADP + n phosphate + (n+1) alpha/beta tubulin heterodimers.. ATP-dependent microtubule severing protein that specifically recognizes and cuts microtubules that are polyglutamylated. Preferentially recognizes and acts on microtubules decorated with short polyglutamate tails: severing activity increases as the number of glutamates per tubulin rises from one to eight, but decreases beyond this glutamylation threshold. Microtubule severing promotes reorganization of cellular microtubule arrays and the release of microtubules from the centrosome following nucleation. Required for membrane traffic from the endoplasmic reticulum (ER) to the Golgi and for completion of the abscission stage of cytokinesis. Also plays a role in axon growth and the formation of axonal branches. This Xenopus tropicalis (Western clawed frog) protein is Spastin.